We begin with the raw amino-acid sequence, 38 residues long: Cytochrome b6-f complex subunit 5 (38 aa).

Residues 5–25 form a helical membrane-spanning segment; the sequence is LLLGIVLGLIPVTLAGLFVAA.

The protein belongs to the PetG family. As to quaternary structure, the 4 large subunits of the cytochrome b6-f complex are cytochrome b6, subunit IV (17 kDa polypeptide, PetD), cytochrome f and the Rieske protein, while the 4 small subunits are PetG, PetL, PetM and PetN. The complex functions as a dimer.

It is found in the cellular thylakoid membrane. Its function is as follows. Component of the cytochrome b6-f complex, which mediates electron transfer between photosystem II (PSII) and photosystem I (PSI), cyclic electron flow around PSI, and state transitions. PetG is required for either the stability or assembly of the cytochrome b6-f complex. The sequence is that of Cytochrome b6-f complex subunit 5 from Synechocystis sp. (strain ATCC 27184 / PCC 6803 / Kazusa).